We begin with the raw amino-acid sequence, 129 residues long: Glycine cleavage system H protein (129 aa).

A Lipoyl-binding domain is found at 24–106; it reads LVRIGISAFA…HGEGWLLLVK (83 aa). An N6-lipoyllysine modification is found at Lys65.

Belongs to the GcvH family. In terms of assembly, the glycine cleavage system is composed of four proteins: P, T, L and H. (R)-lipoate serves as cofactor.

The glycine cleavage system catalyzes the degradation of glycine. The H protein shuttles the methylamine group of glycine from the P protein to the T protein. The sequence is that of Glycine cleavage system H protein from Prochlorococcus marinus (strain SARG / CCMP1375 / SS120).